The following is a 255-amino-acid chain: Na(+)-translocating NADH-quinone reductase subunit C (255 aa).

The helical transmembrane segment at 11-31 threads the bilayer; sequence LGVVVGLSLVCSIIVSTAAVG. Thr-223 is modified (FMN phosphoryl threonine).

Belongs to the NqrC family. As to quaternary structure, composed of six subunits; NqrA, NqrB, NqrC, NqrD, NqrE and NqrF. FMN serves as cofactor.

The protein resides in the cell inner membrane. It catalyses the reaction a ubiquinone + n Na(+)(in) + NADH + H(+) = a ubiquinol + n Na(+)(out) + NAD(+). Its function is as follows. NQR complex catalyzes the reduction of ubiquinone-1 to ubiquinol by two successive reactions, coupled with the transport of Na(+) ions from the cytoplasm to the periplasm. NqrA to NqrE are probably involved in the second step, the conversion of ubisemiquinone to ubiquinol. The polypeptide is Na(+)-translocating NADH-quinone reductase subunit C (Vibrio vulnificus (strain CMCP6)).